Consider the following 62-residue polypeptide: Small ribosomal subunit protein uS14 (62 aa).

Zn(2+) is bound by residues C25, C28, C41, and C44.

Belongs to the universal ribosomal protein uS14 family. Zinc-binding uS14 subfamily. In terms of assembly, part of the 30S ribosomal subunit. Contacts proteins S3 and S10. Requires Zn(2+) as cofactor.

In terms of biological role, binds 16S rRNA, required for the assembly of 30S particles and may also be responsible for determining the conformation of the 16S rRNA at the A site. The polypeptide is Small ribosomal subunit protein uS14 (Hydrogenobaculum sp. (strain Y04AAS1)).